Consider the following 537-residue polypeptide: Frizzled-4 (537 aa).

The N-terminal stretch at 1 to 36 (MAWPGTGPSSRGAPGGVGLRLGLLLQFLLLLRPTLG) is a signal peptide. The Extracellular portion of the chain corresponds to 37–212 (FGDEEERRCD…KCGYDAGLYS (176 aa)). Positions 40–161 (EEERRCDPIR…NDHNHMCMEG (122 aa)) constitute an FZ domain. Disulfide bonds link Cys45–Cys106, Cys53–Cys99, Cys90–Cys128, Cys117–Cys158, Cys121–Cys145, Cys181–Cys200, Cys204–Cys282, and Cys302–Cys377. Asn59 carries an N-linked (GlcNAc...) asparagine glycan. Asn144 carries N-linked (GlcNAc...) asparagine glycosylation. The helical transmembrane segment at 213 to 243 (RSAKEFTDIWMAVWASLCFISTTFTVLTFLI) threads the bilayer. At 244–249 (DSSRFS) the chain is on the cytoplasmic side. Residues 250–275 (YPERPIIFLSMCYNIYSIAYIVRLTV) traverse the membrane as a helical segment. Residues 276 to 299 (GRERISCDFEEAAEPVLIQEGLKN) are Extracellular-facing. The chain crosses the membrane as a helical span at residues 300 to 333 (TGCAIIFLLMYFFGMASSIWWVILTLTWFLAAGL). Topologically, residues 334-336 (KWG) are cytoplasmic. A helical transmembrane segment spans residues 337 to 365 (HEAIEMHSSYFHIAAWAIPAVKTIVILIM). The Extracellular segment spans residues 366-383 (RLVDADELTGLCYVGNQN). Residues 384–410 (LDALTGFVVAPLFTYLVIGTLFIAAGL) form a helical membrane-spanning segment. At 411–431 (VALFKIRSNLQKDGTKTDKLE) the chain is on the cytoplasmic side. A helical transmembrane segment spans residues 432-460 (RLMVKIGVFSVLYTVPATCVIACYFYEIS). The Extracellular portion of the chain corresponds to 461–473 (NWALFRYSADDSN). A helical transmembrane segment spans residues 474 to 495 (MAVEMLKIFMSLLVGITSGMWI). The Cytoplasmic segment spans residues 496-537 (WSAKTLHTWQKCSNRLVNSGKVKREKRGNGWVKPGKGNETVV). Residues 499-504 (KTLHTW) carry the Lys-Thr-X-X-X-Trp motif, mediates interaction with the PDZ domain of Dvl family members motif. Positions 535–537 (TVV) match the PDZ-binding motif.

The protein belongs to the G-protein coupled receptor Fz/Smo family. In terms of assembly, interacts with MAGI3 and NDP. Component of a complex, at least composed of TSPAN12, FZD4 and norrin (NDP). Interacts (via FZ domain) with TSKU; TSKU competes with WNT2B for binding to FZD4, inhibiting Wnt signaling and repressing peripheral eye development. Interacts with glypican GPC3. Post-translationally, ubiquitinated by ZNRF3, leading to its degradation by the proteasome. Expressed in chondrocytes.

The protein localises to the cell membrane. In terms of biological role, receptor for Wnt proteins. Most frizzled receptors are coupled to the beta-catenin (CTNNB1) canonical signaling pathway, which leads to the activation of disheveled proteins, inhibition of GSK-3 kinase, nuclear accumulation of beta-catenin (CTNNB1) and activation of Wnt target genes. Plays a critical role in retinal vascularization by acting as a receptor for Wnt proteins and norrin (NDP). In retina, it can be activated by Wnt protein-binding and also by Wnt-independent signaling via binding of norrin (NDP), promoting in both cases beta-catenin (CTNNB1) accumulation and stimulation of LEF/TCF-mediated transcriptional programs. A second signaling pathway involving PKC and calcium fluxes has been seen for some family members, but it is not yet clear if it represents a distinct pathway or if it can be integrated in the canonical pathway, as PKC seems to be required for Wnt-mediated inactivation of GSK-3 kinase. Both pathways seem to involve interactions with G-proteins. May be involved in transduction and intercellular transmission of polarity information during tissue morphogenesis and/or in differentiated tissues. Activation by Wnt5A stimulates PKC activity via a G-protein-dependent mechanism. The polypeptide is Frizzled-4 (Fzd4) (Mus musculus (Mouse)).